Reading from the N-terminus, the 596-residue chain is Elongation factor 4 (596 aa).

The tr-type G domain maps to 2–184; the sequence is SHIRNFSIIA…RLVHTIPAPE (183 aa). GTP is bound by residues 14-19 and 131-134; these read DHGKST and NKMD.

This sequence belongs to the TRAFAC class translation factor GTPase superfamily. Classic translation factor GTPase family. LepA subfamily.

It is found in the cell inner membrane. It carries out the reaction GTP + H2O = GDP + phosphate + H(+). Functionally, required for accurate and efficient protein synthesis under certain stress conditions. May act as a fidelity factor of the translation reaction, by catalyzing a one-codon backward translocation of tRNAs on improperly translocated ribosomes. Back-translocation proceeds from a post-translocation (POST) complex to a pre-translocation (PRE) complex, thus giving elongation factor G a second chance to translocate the tRNAs correctly. Binds to ribosomes in a GTP-dependent manner. The chain is Elongation factor 4 from Pseudomonas putida (strain GB-1).